The chain runs to 329 residues: Isoaspartyl peptidase/L-asparaginase (329 aa).

Threonine 173 serves as the catalytic Nucleophile. Substrate-binding positions include 201 to 204 (RVSD) and 222 to 225 (TGVG).

It belongs to the Ntn-hydrolase family. In terms of assembly, heterotetramer of two alpha and two beta chains arranged as a dimer of alpha/beta heterodimers. Cleaved into an alpha and beta chain by autocatalysis; this activates the enzyme. The N-terminal residue of the beta subunit is responsible for the nucleophile hydrolase activity.

It catalyses the reaction Cleavage of a beta-linked Asp residue from the N-terminus of a polypeptide.. In terms of biological role, degrades proteins damaged by L-isoaspartyl residue formation (also known as beta-Asp residues). Probably performs the final step in the degradation of the reserve polymer cyanophycin (depolymerizes the building block L-beta-Asp-Arg). Also has L-asparaginase activity. The protein is Isoaspartyl peptidase/L-asparaginase of Synechocystis sp. (strain ATCC 27184 / PCC 6803 / Kazusa).